The sequence spans 420 residues: Serine hydroxymethyltransferase (420 aa).

Residues Leu121 and 125-127 (GHL) contribute to the (6S)-5,6,7,8-tetrahydrofolate site. Lys230 carries the N6-(pyridoxal phosphate)lysine modification. (6S)-5,6,7,8-tetrahydrofolate-binding positions include Glu246 and 354 to 356 (SPF).

This sequence belongs to the SHMT family. In terms of assembly, homodimer. It depends on pyridoxal 5'-phosphate as a cofactor.

Its subcellular location is the cytoplasm. The enzyme catalyses (6R)-5,10-methylene-5,6,7,8-tetrahydrofolate + glycine + H2O = (6S)-5,6,7,8-tetrahydrofolate + L-serine. It functions in the pathway one-carbon metabolism; tetrahydrofolate interconversion. Its pathway is amino-acid biosynthesis; glycine biosynthesis; glycine from L-serine: step 1/1. In terms of biological role, catalyzes the reversible interconversion of serine and glycine with tetrahydrofolate (THF) serving as the one-carbon carrier. This reaction serves as the major source of one-carbon groups required for the biosynthesis of purines, thymidylate, methionine, and other important biomolecules. Also exhibits THF-independent aldolase activity toward beta-hydroxyamino acids, producing glycine and aldehydes, via a retro-aldol mechanism. This chain is Serine hydroxymethyltransferase, found in Rickettsia akari (strain Hartford).